The sequence spans 411 residues: Calmodulin-binding receptor-like cytoplasmic kinase 2 (411 aa).

2 disordered regions span residues 1 to 44 and 66 to 99; these read MPSR…DTTT and SNYI…YGNA. Composition is skewed to low complexity over residues 16–44 and 66–95; these read TTSS…DTTT and SNYI…VQRS. Thr108 carries the phosphothreonine modification. The 280-residue stretch at 119-398 folds into the Protein kinase domain; it reads FSPSFRIGQG…MKKCSEILWG (280 aa). ATP is bound by residues 125–133 and Lys147; that span reads IGQGGFGTV. Residues 134–159 form a caM-binding region; that stretch reads YKVKLRDGKTFAVKRAKKSMHDDRQG. Asp247 serves as the catalytic Proton acceptor. 2 positions are modified to phosphoserine: Ser251 and Ser283. Phosphothreonine occurs at positions 284 and 289. At Tyr297 the chain carries Phosphotyrosine.

This sequence belongs to the protein kinase superfamily. Ser/Thr protein kinase family. Interacts with calmodulin (CaM) in a Ca(2+)-dependent manner.

It localises to the cytoplasm. It catalyses the reaction L-seryl-[protein] + ATP = O-phospho-L-seryl-[protein] + ADP + H(+). The enzyme catalyses L-threonyl-[protein] + ATP = O-phospho-L-threonyl-[protein] + ADP + H(+). This chain is Calmodulin-binding receptor-like cytoplasmic kinase 2 (CRCK2), found in Arabidopsis thaliana (Mouse-ear cress).